Reading from the N-terminus, the 139-residue chain is Peptide methionine sulfoxide reductase MsrB (139 aa).

Residues Asp8–Gln130 enclose the MsrB domain. Residues Cys47, Cys50, Cys96, and Cys99 each contribute to the Zn(2+) site. The Nucleophile role is filled by Cys119.

This sequence belongs to the MsrB Met sulfoxide reductase family. Requires Zn(2+) as cofactor.

The enzyme catalyses L-methionyl-[protein] + [thioredoxin]-disulfide + H2O = L-methionyl-(R)-S-oxide-[protein] + [thioredoxin]-dithiol. This is Peptide methionine sulfoxide reductase MsrB from Acinetobacter baumannii (strain SDF).